A 520-amino-acid polypeptide reads, in one-letter code: Glutamate--cysteine ligase (520 aa).

This sequence belongs to the glutamate--cysteine ligase type 1 family. Type 1 subfamily.

The enzyme catalyses L-cysteine + L-glutamate + ATP = gamma-L-glutamyl-L-cysteine + ADP + phosphate + H(+). The protein operates within sulfur metabolism; glutathione biosynthesis; glutathione from L-cysteine and L-glutamate: step 1/2. In Leptospira interrogans serogroup Icterohaemorrhagiae serovar Lai (strain 56601), this protein is Glutamate--cysteine ligase.